Consider the following 102-residue polypeptide: Aspartyl/glutamyl-tRNA(Asn/Gln) amidotransferase subunit C (102 aa).

The protein belongs to the GatC family. In terms of assembly, heterotrimer of A, B and C subunits.

It catalyses the reaction L-glutamyl-tRNA(Gln) + L-glutamine + ATP + H2O = L-glutaminyl-tRNA(Gln) + L-glutamate + ADP + phosphate + H(+). The enzyme catalyses L-aspartyl-tRNA(Asn) + L-glutamine + ATP + H2O = L-asparaginyl-tRNA(Asn) + L-glutamate + ADP + phosphate + 2 H(+). In terms of biological role, allows the formation of correctly charged Asn-tRNA(Asn) or Gln-tRNA(Gln) through the transamidation of misacylated Asp-tRNA(Asn) or Glu-tRNA(Gln) in organisms which lack either or both of asparaginyl-tRNA or glutaminyl-tRNA synthetases. The reaction takes place in the presence of glutamine and ATP through an activated phospho-Asp-tRNA(Asn) or phospho-Glu-tRNA(Gln). The protein is Aspartyl/glutamyl-tRNA(Asn/Gln) amidotransferase subunit C of Bordetella pertussis (strain Tohama I / ATCC BAA-589 / NCTC 13251).